Here is a 256-residue protein sequence, read N- to C-terminus: tRNA (guanine-N(7)-)-methyltransferase (256 aa).

Residues 1-43 (MDVDPVNSEMELDNKPTCETVPGLPQKKHYRQRAHSNPHSDHD) form a disordered region. Basic residues predominate over residues 26–36 (QKKHYRQRAHS). S-adenosyl-L-methionine-binding positions include Gly74, 97 to 98 (EI), 132 to 133 (NA), and Leu152. Asp155 is a catalytic residue. 230 to 232 (TEE) is a binding site for S-adenosyl-L-methionine.

It belongs to the class I-like SAM-binding methyltransferase superfamily. TrmB family.

The protein localises to the nucleus. It carries out the reaction guanosine(46) in tRNA + S-adenosyl-L-methionine = N(7)-methylguanosine(46) in tRNA + S-adenosyl-L-homocysteine. Its pathway is tRNA modification; N(7)-methylguanine-tRNA biosynthesis. Catalyzes the formation of N(7)-methylguanine at position 46 (m7G46) in tRNA. This Caenorhabditis briggsae protein is tRNA (guanine-N(7)-)-methyltransferase.